A 266-amino-acid polypeptide reads, in one-letter code: ATP synthase subunit a (266 aa).

6 helical membrane-spanning segments follow: residues 38–58, 99–119, 126–146, 162–182, 191–211, and 224–244; these read KQML…VLAA, LLFS…IPLI, HVGG…AIGI, GVPW…NFVV, LFAT…GIEY, and SVLV…IMVL.

This sequence belongs to the ATPase A chain family. In terms of assembly, F-type ATPases have 2 components, CF(1) - the catalytic core - and CF(0) - the membrane proton channel. CF(1) has five subunits: alpha(3), beta(3), gamma(1), delta(1), epsilon(1). CF(0) has three main subunits: a(1), b(2) and c(9-12). The alpha and beta chains form an alternating ring which encloses part of the gamma chain. CF(1) is attached to CF(0) by a central stalk formed by the gamma and epsilon chains, while a peripheral stalk is formed by the delta and b chains.

It localises to the cell membrane. Its function is as follows. Key component of the proton channel; it plays a direct role in the translocation of protons across the membrane. The chain is ATP synthase subunit a from Pseudarthrobacter chlorophenolicus (strain ATCC 700700 / DSM 12829 / CIP 107037 / JCM 12360 / KCTC 9906 / NCIMB 13794 / A6) (Arthrobacter chlorophenolicus).